Here is a 221-residue protein sequence, read N- to C-terminus: Adenylate kinase (221 aa).

10 to 15 (GAGKGT) is a binding site for ATP. The segment at 30–59 (STGDIFRQNLRDNTELGKLAKEYMDKGLLV) is NMP. AMP is bound by residues Thr-31, Arg-36, 57–59 (LLV), 85–88 (GYPR), and Gln-92. Positions 126–163 (GRRVCPVCGATYHIKTSPPKVDNVCDKCGSELIQRSDD) are LID. Arg-127 contributes to the ATP binding site. Zn(2+) contacts are provided by Cys-130 and Cys-133. ATP is bound at residue 136-137 (TY). Residues Cys-150 and Cys-153 each contribute to the Zn(2+) site. 2 residues coordinate AMP: Arg-160 and Arg-171. Lys-199 is an ATP binding site.

This sequence belongs to the adenylate kinase family. In terms of assembly, monomer.

The protein resides in the cytoplasm. The enzyme catalyses AMP + ATP = 2 ADP. The protein operates within purine metabolism; AMP biosynthesis via salvage pathway; AMP from ADP: step 1/1. Its function is as follows. Catalyzes the reversible transfer of the terminal phosphate group between ATP and AMP. Plays an important role in cellular energy homeostasis and in adenine nucleotide metabolism. The protein is Adenylate kinase of Caldanaerobacter subterraneus subsp. tengcongensis (strain DSM 15242 / JCM 11007 / NBRC 100824 / MB4) (Thermoanaerobacter tengcongensis).